The chain runs to 95 residues: Co-chaperonin GroES (95 aa).

This sequence belongs to the GroES chaperonin family. In terms of assembly, heptamer of 7 subunits arranged in a ring. Interacts with the chaperonin GroEL.

Its subcellular location is the cytoplasm. Functionally, together with the chaperonin GroEL, plays an essential role in assisting protein folding. The GroEL-GroES system forms a nano-cage that allows encapsulation of the non-native substrate proteins and provides a physical environment optimized to promote and accelerate protein folding. GroES binds to the apical surface of the GroEL ring, thereby capping the opening of the GroEL channel. The chain is Co-chaperonin GroES from Streptococcus thermophilus (strain ATCC BAA-491 / LMD-9).